An 803-amino-acid polypeptide reads, in one-letter code: Lon protease (803 aa).

The Lon N-terminal domain occupies 9-202 (MPVLPLRDVV…YLLGMMESEA (194 aa)). 356-363 (GPPGVGKT) serves as a coordination point for ATP. One can recognise a Lon proteolytic domain in the interval 592 to 773 (QNRIGEVTGL…DEVLGFALEN (182 aa)). Active-site residues include serine 679 and lysine 722.

Belongs to the peptidase S16 family. In terms of assembly, homohexamer. Organized in a ring with a central cavity.

The protein resides in the cytoplasm. The enzyme catalyses Hydrolysis of proteins in presence of ATP.. Its function is as follows. ATP-dependent serine protease that mediates the selective degradation of mutant and abnormal proteins as well as certain short-lived regulatory proteins. Required for cellular homeostasis and for survival from DNA damage and developmental changes induced by stress. Degrades polypeptides processively to yield small peptide fragments that are 5 to 10 amino acids long. Binds to DNA in a double-stranded, site-specific manner. The sequence is that of Lon protease from Haemophilus influenzae (strain ATCC 51907 / DSM 11121 / KW20 / Rd).